Consider the following 150-residue polypeptide: UPF0178 protein BamMC406_1579 (150 aa).

The protein belongs to the UPF0178 family.

This chain is UPF0178 protein BamMC406_1579, found in Burkholderia ambifaria (strain MC40-6).